Consider the following 730-residue polypeptide: Sodium-dependent neutral amino acid transporter B(0)AT2 (730 aa).

Residues Met-1–Leu-24 form a disordered region. At Met-1–Tyr-70 the chain is on the extracellular side. Residues Ser-25 and Ser-55 each carry the phosphoserine modification. 3 helical membrane-spanning segments follow: residues Ile-71–Cys-91, Gly-97–Leu-117, and Val-149–Phe-169. The Cytoplasmic segment spans residues Ser-170 to Gly-223. A run of 2 helical transmembrane segments spans residues Leu-224 to Ile-244 and Ile-253 to Leu-273. A glycan (N-linked (GlcNAc...) asparagine) is linked at Asn-276. The next 2 helical transmembrane spans lie at Ala-302–Ser-322 and Val-335–Val-355. Over Leu-356–Phe-458 the chain is Cytoplasmic. 5 consecutive transmembrane segments (helical) span residues Trp-459–Ile-479, Lys-494–Gln-514, Thr-530–Ile-550, Tyr-575–Ser-595, and Leu-619–Val-639. Residues Arg-640–Leu-730 are Extracellular-facing. 3 positions are modified to phosphoserine: Ser-687, Ser-699, and Ser-701.

This sequence belongs to the sodium:neurotransmitter symporter (SNF) (TC 2.A.22) family. SLC6A15 subfamily.

The protein resides in the membrane. The catalysed reaction is L-leucine(in) + Na(+)(in) = L-leucine(out) + Na(+)(out). It catalyses the reaction L-isoleucine(in) + Na(+)(in) = L-isoleucine(out) + Na(+)(out). It carries out the reaction L-methionine(in) + Na(+)(in) = L-methionine(out) + Na(+)(out). The enzyme catalyses L-proline(in) + Na(+)(in) = L-proline(out) + Na(+)(out). The catalysed reaction is L-alanine(in) + Na(+)(in) = L-alanine(out) + Na(+)(out). It catalyses the reaction L-asparagine(in) + Na(+)(in) = L-asparagine(out) + Na(+)(out). It carries out the reaction L-valine(in) + Na(+)(in) = L-valine(out) + Na(+)(out). The enzyme catalyses L-cysteine(in) + Na(+)(in) = L-cysteine(out) + Na(+)(out). The catalysed reaction is L-glutamine(in) + Na(+)(in) = L-glutamine(out) + Na(+)(out). It catalyses the reaction L-serine(in) + Na(+)(in) = L-serine(out) + Na(+)(out). It carries out the reaction L-threonine(in) + Na(+)(in) = L-threonine(out) + Na(+)(out). The enzyme catalyses L-pipecolate(in) + Na(+)(in) = L-pipecolate(out) + Na(+)(out). The catalysed reaction is L-phenylalanine(in) + Na(+)(in) = L-phenylalanine(out) + Na(+)(out). In terms of biological role, functions as a sodium-dependent neutral amino acid transporter. Exhibits preference for the branched-chain amino acids, particularly leucine, valine and isoleucine and methionine. Can also transport low-affinity substrates such as alanine, phenylalanine, glutamine and pipecolic acid. Mediates the saturable, pH-sensitive and electrogenic cotransport of proline and sodium ions with a stoichiometry of 1:1. May have a role as transporter for neurotransmitter precursors into neurons. In contrast to other members of the neurotransmitter transporter family, does not appear to be chloride-dependent. This Pongo abelii (Sumatran orangutan) protein is Sodium-dependent neutral amino acid transporter B(0)AT2 (SLC6A15).